The sequence spans 510 residues: NAD(P)H-quinone oxidoreductase subunit 2 B, chloroplastic (510 aa).

14 helical membrane passes run 24–44, 59–79, 99–119, 124–144, 149–169, 184–204, 229–249, 261–281, 295–315, 323–343, 354–374, 395–415, 418–438, and 484–504; these read LLLF…GLIL, WFYF…LFRW, IFQF…VEYI, MAIT…MFLC, LITI…LSGY, LLMG…LYGL, ISIA…LAPF, PTPV…ALAT, WHLL…LLAI, MLAY…IVGD, YMLF…LFGL, ALSL…AGFF, LYLF…IGLL, and MTVC…ILAI.

This sequence belongs to the complex I subunit 2 family. In terms of assembly, NDH is composed of at least 16 different subunits, 5 of which are encoded in the nucleus.

Its subcellular location is the plastid. It localises to the chloroplast thylakoid membrane. The catalysed reaction is a plastoquinone + NADH + (n+1) H(+)(in) = a plastoquinol + NAD(+) + n H(+)(out). It catalyses the reaction a plastoquinone + NADPH + (n+1) H(+)(in) = a plastoquinol + NADP(+) + n H(+)(out). NDH shuttles electrons from NAD(P)H:plastoquinone, via FMN and iron-sulfur (Fe-S) centers, to quinones in the photosynthetic chain and possibly in a chloroplast respiratory chain. The immediate electron acceptor for the enzyme in this species is believed to be plastoquinone. Couples the redox reaction to proton translocation, and thus conserves the redox energy in a proton gradient. The chain is NAD(P)H-quinone oxidoreductase subunit 2 B, chloroplastic from Zea mays (Maize).